Reading from the N-terminus, the 294-residue chain is Release factor glutamine methyltransferase (294 aa).

S-adenosyl-L-methionine-binding residues include E148 and N201. Substrate is bound at residue 201 to 204; sequence NPPY.

The protein belongs to the protein N5-glutamine methyltransferase family. PrmC subfamily.

The enzyme catalyses L-glutaminyl-[peptide chain release factor] + S-adenosyl-L-methionine = N(5)-methyl-L-glutaminyl-[peptide chain release factor] + S-adenosyl-L-homocysteine + H(+). Methylates the class 1 translation termination release factors RF1/PrfA and RF2/PrfB on the glutamine residue of the universally conserved GGQ motif. This is Release factor glutamine methyltransferase from Bifidobacterium longum (strain NCC 2705).